The sequence spans 117 residues: Large ribosomal subunit protein uL24 (117 aa).

The protein belongs to the universal ribosomal protein uL24 family. In terms of assembly, part of the 50S ribosomal subunit.

In terms of biological role, one of two assembly initiator proteins, it binds directly to the 5'-end of the 23S rRNA, where it nucleates assembly of the 50S subunit. One of the proteins that surrounds the polypeptide exit tunnel on the outside of the subunit. This chain is Large ribosomal subunit protein uL24, found in Trichormus variabilis (strain ATCC 29413 / PCC 7937) (Anabaena variabilis).